Here is a 230-residue protein sequence, read N- to C-terminus: NAD(P)H-hydrate epimerase (230 aa).

A YjeF N-terminal domain is found at 11 to 218; the sequence is AIAVDQELFN…ALQRKYELNL (208 aa). 61–65 is a binding site for (6S)-NADPHX; sequence NNGGD. Positions 62 and 126 each coordinate K(+). (6S)-NADPHX contacts are provided by residues 130 to 136 and Asp-159; that span reads GFSFKPP. A K(+)-binding site is contributed by Ser-162.

The protein belongs to the NnrE/AIBP family. K(+) serves as cofactor.

It carries out the reaction (6R)-NADHX = (6S)-NADHX. The enzyme catalyses (6R)-NADPHX = (6S)-NADPHX. Catalyzes the epimerization of the S- and R-forms of NAD(P)HX, a damaged form of NAD(P)H that is a result of enzymatic or heat-dependent hydration. This is a prerequisite for the S-specific NAD(P)H-hydrate dehydratase to allow the repair of both epimers of NAD(P)HX. The polypeptide is NAD(P)H-hydrate epimerase (Drosophila melanogaster (Fruit fly)).